Here is an 85-residue protein sequence, read N- to C-terminus: Putative membrane protein insertion efficiency factor (85 aa).

Belongs to the UPF0161 family.

It is found in the cell inner membrane. Its function is as follows. Could be involved in insertion of integral membrane proteins into the membrane. The sequence is that of Putative membrane protein insertion efficiency factor from Sodalis glossinidius (strain morsitans).